A 97-amino-acid polypeptide reads, in one-letter code: RNA-binding protein Hfq (97 aa).

Residues 10–70 (DPFLNALRKE…ISTIVPARSV (61 aa)) form the Sm domain. The tract at residues 75–97 (ENRPQAAPASTLVQVETVQQPAE) is disordered. Polar residues predominate over residues 85-97 (TLVQVETVQQPAE).

This sequence belongs to the Hfq family. As to quaternary structure, homohexamer.

Functionally, RNA chaperone that binds small regulatory RNA (sRNAs) and mRNAs to facilitate mRNA translational regulation in response to envelope stress, environmental stress and changes in metabolite concentrations. Also binds with high specificity to tRNAs. The chain is RNA-binding protein Hfq from Neisseria meningitidis serogroup C / serotype 2a (strain ATCC 700532 / DSM 15464 / FAM18).